Reading from the N-terminus, the 130-residue chain is uncharacterized protein (130 aa).

3 helical membrane passes run 34–54 (AILI…FAFF), 73–93 (LLLT…GWLA), and 107–127 (FGTG…IVWI).

The protein resides in the cell membrane. This is an uncharacterized protein from Mycoplasma pneumoniae (strain ATCC 29342 / M129 / Subtype 1) (Mycoplasmoides pneumoniae).